A 506-amino-acid polypeptide reads, in one-letter code: Cysteine--tRNA ligase (506 aa).

Cys34 serves as a coordination point for Zn(2+). Positions 36–46 (PTVYDFAHIGN) match the 'HIGH' region motif. Zn(2+) is bound by residues Cys230, His269, and Glu273. The 'KMSKS' region signature appears at 302–306 (KMSKS). An ATP-binding site is contributed by Lys305.

The protein belongs to the class-I aminoacyl-tRNA synthetase family. As to quaternary structure, monomer. Zn(2+) serves as cofactor.

Its subcellular location is the cytoplasm. The catalysed reaction is tRNA(Cys) + L-cysteine + ATP = L-cysteinyl-tRNA(Cys) + AMP + diphosphate. This is Cysteine--tRNA ligase from Brucella melitensis biotype 2 (strain ATCC 23457).